Reading from the N-terminus, the 993-residue chain is MTCLFPRALGSLALLMVVLLVQGELHVKPGGQHREDGTALQLAKRRYKREWVKFAKPCREREDNSRRNPIAKITSDFQKNQKITYRISGVGIDQPPFGIFVVDPNNGDINITAIVDREETPSFLITCRALNALGQDVERPLILTVKILDVNDNPPIFSQTIFKGEIEENSASNSLVMILNATDADEPNHMNSKIAFKIVSQEPAGMSMFLISRNTGEVRTLTSSLDREQISSYHLVVSGADNDGTGLSTQCECSIKIKDVNDNFPVLRESQYSARIEENTLNAELLRFQVTDWDEEYTDNWLAVYFFTSGNEGNWFEIETDPRTNEGILKVVKALDYEQVQSMQFSIAVRNKAEFHQSVISQYRVQSTPVTIQVIDVREGISFRPPSKTFTVQRGVSTNKLVGYILGTYQATDEDTGKAASSVRYVLGRNDGGLLVIDSKTAQIKFVKNIDRDSTFIVNKTISAEVLAIDENTGKTSTGTIYVEVPSFNENCPSVVLEKKDICTSSPSVTLSVRTLDRGKYTGPYTVSLEEQPLKLPVMWTITTLNATSALLQAQQQVSPGVYNVPVIVKDNQDGLCDTPESLTLTVCQCDDRSMCRAPIPSREPNTYGESSWRLGPAAIGLILLGLLMLLLAPLLLLTCDCGSGPIGGAATGGFIPVPDGSEGTIHQWGIEGAQPEDKEITNICVPPVTTNGADFMESSEVCTNTYAGGTMVEGASGMEMITKLGGATGATAALGPCSLGYSGTMRTRHSTGGTLKDYAAPVNMTFLGSYFSQKSLAYAEEEDEREVNDCLLIYDDEGEDAAPHSPTLSSCSIFGDDLDDNFLDSLGPKFKKLAEICLGIDDEAKQAKPGPKDSGSGADTCARSMEVPQSGSNRYQTLPGSLEVTQTGSKICHTLSGNQETSVMSTSGSVHPAVAIPDPLQLGNYLLTETYSTSGSFAQPTTVTFDPHVTQNVTVTERVICPLPSASSSIVAPTELRGSYNMLYTKETCSHL.

The N-terminal stretch at 1–23 (MTCLFPRALGSLALLMVVLLVQG) is a signal peptide. Positions 24 to 49 (ELHVKPGGQHREDGTALQLAKRRYKR) are excised as a propeptide. 4 consecutive Cadherin domains span residues 50–157 (EWVK…PPIF), 158–267 (SQTI…FPVL), 268–388 (RESQ…PPSK), and 384–495 (RPPS…CPSV). Residues 50–617 (EWVKFAKPCR…YGESSWRLGP (568 aa)) are Extracellular-facing. Asn110 and Asn180 each carry an N-linked (GlcNAc...) asparagine glycan. Residues Asn459 and Asn546 are each glycosylated (N-linked (GlcNAc...) asparagine). A helical membrane pass occupies residues 618–638 (AAIGLILLGLLMLLLAPLLLL). Topologically, residues 639 to 993 (TCDCGSGPIG…LYTKETCSHL (355 aa)) are cytoplasmic. The tract at residues 641 to 714 (DCGSGPIGGA…NTYAGGTMVE (74 aa)) is required for interaction with CTNND1 and localization at cell-cell junctions. Residues 845 to 876 (AKQAKPGPKDSGSGADTCARSMEVPQSGSNRY) form a disordered region. 2 Desmoglein repeat repeats span residues 905-930 (MSTSGSVHPAVAIPDPLQLGNYLLTE) and 931-961 (TYSTSGSFAQPTTVTFDPHVTQNVTVTERVI).

In terms of assembly, homodimer. Part of a complex that contains DSG3, PKP1, YAP1 and YWHAG; the complex is required for localization of DSG3 and YAP1 to the cell membrane in keratinocytes. Interacts with PKP2. Interacts with CTNND1; the interaction facilitates DSG3 localization and retention at cell-cell junctions. Interacts with CDH1; the interaction is required for CDH1 localization to developing adherens junctions. Interacts with RAC1; the interaction is required for DSG3 translocation to cell-cell junctions, organization of cortical F-actin bundles and actin anchoring at cell-cell junctions. Interacts with DSC3; the interaction may limit the interaction of DSC3 with p38MAPK family members and therefore repress p38MAPK signaling activation. As to expression, expressed in the basal layer of the outer root sheath of the telogen hair club, specifically at the cell membrane between the apex of the cells and the surrounding hair club (at protein level). Expression is less abundant between the lateral margins of the outer root sheath basal cells (at protein level). Expressed in epidermis. Expressed in the epithelium of the tongue.

It is found in the cell membrane. Its subcellular location is the cell junction. The protein resides in the desmosome. It localises to the cytoplasm. The protein localises to the tight junction. In terms of biological role, a component of desmosome cell-cell junctions which are required for positive regulation of cellular adhesion. Required for adherens and desmosome junction assembly in response to mechanical force in keratinocytes. Required for desmosome-mediated cell-cell adhesion of cells surrounding the telogen hair club and the basal layer of the outer root sheath epithelium, consequently is essential for the anchoring of telogen hairs in the hair follicle. Required for the maintenance of the epithelial barrier via promoting desmosome-mediated intercellular attachment of suprabasal epithelium to basal cells. May play a role in the protein stability of the desmosome plaque components DSP, JUP, PKP1, PKP2 and PKP3. Required for YAP1 localization at the plasma membrane in keratinocytes in response to mechanical strain, via the formation of an interaction complex composed of DSG3, PKP1 and YWHAG. May also be involved in the positive regulation of YAP1 target gene transcription and as a result cell proliferation. Positively regulates cellular contractility and cell junction formation via organization of cortical F-actin bundles and anchoring of actin to tight junctions, in conjunction with RAC1. The cytoplasmic pool of DSG3 is required for the localization of CDH1 and CTNNB1 at developing adherens junctions, potentially via modulation of SRC activity. Inhibits keratinocyte migration via suppression of p38MAPK signaling, may therefore play a role in moderating wound healing. The sequence is that of Desmoglein-3 (Dsg3) from Mus musculus (Mouse).